The chain runs to 99 residues: MSPMYYLYLSAVLFTLGAVGVLLRRNAIIVFMCVELMLNAANLALVTFSRINGNLDGQVMAFFVMVVAAAEVVVGLAIIVAIFRTRRSASVDDANLLKY.

3 consecutive transmembrane segments (helical) span residues 3 to 23 (PMYY…GVLL), 28 to 48 (IIVF…LVTF), and 62 to 82 (FFVM…IVAI).

It belongs to the complex I subunit 4L family. NDH-1 is composed of 14 different subunits. Subunits NuoA, H, J, K, L, M, N constitute the membrane sector of the complex.

The protein localises to the cell membrane. The catalysed reaction is a quinone + NADH + 5 H(+)(in) = a quinol + NAD(+) + 4 H(+)(out). Its function is as follows. NDH-1 shuttles electrons from NADH, via FMN and iron-sulfur (Fe-S) centers, to quinones in the respiratory chain. The immediate electron acceptor for the enzyme in this species is believed to be a menaquinone. Couples the redox reaction to proton translocation (for every two electrons transferred, four hydrogen ions are translocated across the cytoplasmic membrane), and thus conserves the redox energy in a proton gradient. The polypeptide is NADH-quinone oxidoreductase subunit K (Acidothermus cellulolyticus (strain ATCC 43068 / DSM 8971 / 11B)).